Consider the following 750-residue polypeptide: Methylmalonyl-CoA mutase, mitochondrial (750 aa).

A mitochondrion-targeting transit peptide spans 1–32; the sequence is MLRAKNQLFLLSPHYLRQVKESSGSRLIQQRL. Residue Gln-50 coordinates malonyl-CoA. Lys-89 bears the N6-acetyllysine mark. Malonyl-CoA is bound by residues 96–99 and 106–110; these read YPTM and TIRQY. Lys-212 carries the post-translational modification N6-acetyllysine. Malonyl-CoA is bound by residues 216 to 218, Arg-228, Lys-255, His-265, and 304 to 306; these read TIQ and RLS. Lys-335 carries the post-translational modification N6-acetyllysine. N6-succinyllysine is present on Lys-343. Phosphoserine is present on Ser-481. Lys-595 carries the post-translational modification N6-succinyllysine. Residue Lys-602 is modified to N6-acetyllysine. The region spanning 614–746 is the B12-binding domain; that stretch reads RPRLLVAKMG…DDIEKCLEKK (133 aa). His-627 contacts adenosylcob(III)alamin.

The protein belongs to the methylmalonyl-CoA mutase family. As to quaternary structure, homodimer. Interacts (the apoenzyme form) with MMAA; the interaction is GTP dependent. Adenosylcob(III)alamin serves as cofactor.

The protein resides in the mitochondrion matrix. Its subcellular location is the mitochondrion. It localises to the cytoplasm. It catalyses the reaction (R)-methylmalonyl-CoA = succinyl-CoA. With respect to regulation, inhibited by itaconyl-CoA, a metabolite that inactivates the coenzyme B12 cofactor. In terms of biological role, catalyzes the reversible isomerization of methylmalonyl-CoA (MMCoA) (generated from branched-chain amino acid metabolism and degradation of dietary odd chain fatty acids and cholesterol) to succinyl-CoA (3-carboxypropionyl-CoA), a key intermediate of the tricarboxylic acid cycle. The chain is Methylmalonyl-CoA mutase, mitochondrial (MMUT) from Bos taurus (Bovine).